Here is a 341-residue protein sequence, read N- to C-terminus: Anthranilate phosphoribosyltransferase (341 aa).

5-phospho-alpha-D-ribose 1-diphosphate contacts are provided by residues G79, 82–83 (GD), T87, 89–92 (NIST), 107–115 (KHGNRSISS), and S119. Position 79 (G79) interacts with anthranilate. Residue S91 coordinates Mg(2+). N110 is an anthranilate binding site. An anthranilate-binding site is contributed by R164. Positions 222 and 223 each coordinate Mg(2+).

It belongs to the anthranilate phosphoribosyltransferase family. In terms of assembly, homodimer. Requires Mg(2+) as cofactor.

It carries out the reaction N-(5-phospho-beta-D-ribosyl)anthranilate + diphosphate = 5-phospho-alpha-D-ribose 1-diphosphate + anthranilate. Its pathway is amino-acid biosynthesis; L-tryptophan biosynthesis; L-tryptophan from chorismate: step 2/5. Functionally, catalyzes the transfer of the phosphoribosyl group of 5-phosphorylribose-1-pyrophosphate (PRPP) to anthranilate to yield N-(5'-phosphoribosyl)-anthranilate (PRA). The protein is Anthranilate phosphoribosyltransferase of Blochmanniella pennsylvanica (strain BPEN).